The following is a 366-amino-acid chain: Aminomethyltransferase (366 aa).

The protein belongs to the GcvT family. In terms of assembly, the glycine cleavage system is composed of four proteins: P, T, L and H.

It carries out the reaction N(6)-[(R)-S(8)-aminomethyldihydrolipoyl]-L-lysyl-[protein] + (6S)-5,6,7,8-tetrahydrofolate = N(6)-[(R)-dihydrolipoyl]-L-lysyl-[protein] + (6R)-5,10-methylene-5,6,7,8-tetrahydrofolate + NH4(+). In terms of biological role, the glycine cleavage system catalyzes the degradation of glycine. The sequence is that of Aminomethyltransferase from Bacillus cereus (strain G9842).